Here is a 154-residue protein sequence, read N- to C-terminus: Ascorbate-specific PTS system EIIA component (154 aa).

A PTS EIIA type-2 domain is found at 6-150 (SLAENNSIRL…QEVLDLIDRT (145 aa)). Residue histidine 68 is the Tele-phosphohistidine intermediate of the active site. Phosphohistidine is present on histidine 68.

The protein localises to the cytoplasm. The phosphoenolpyruvate-dependent sugar phosphotransferase system (sugar PTS), a major carbohydrate active transport system, catalyzes the phosphorylation of incoming sugar substrates concomitantly with their translocation across the cell membrane. The enzyme II UlaABC PTS system is involved in ascorbate transport. This is Ascorbate-specific PTS system EIIA component (ulaC) from Salmonella typhi.